The primary structure comprises 602 residues: MKEYKLENIRNFSIIAHIDHGKSTIADRLLESTSTVEQREMREQLLDSMDLERERGITIKAHPVTMYYEYNGEVYQLNLIDTPGHVDFSYEVSRSLAACEGALLIVDAAQGVQAQSLANVYLALERDLEIIPILNKIDLPAANPERIRKQIEDYIGLDTTHAIACSAKTGEGISEILEAIIELIPPPKLPEETELKALIFDSHYDPYVGIMVYVRVISGEIKKGDRITFMATKGSAFEVLGVGAFLPEATLIEGSLRAGQVGYFIANLKKVKDVKIGDTVTTVKHPAKVPLDGFKEINPVVFAGIYPIDSSDFDTLKDALGRLQLNDSALTIEQESSHSLGFGFRCGFLGLLHLEIVFERIIREFDLDIIATAPSVIYKIVLKNGKTLFIDNPTAYPDPSIIEHLEEPWVHVNIITPQEYLSSIMNLCLDKRGVCLKTEMLDQHRLVLSYDLPLNEIVSDFNDKLKSVTKGYGSFDYRLGDYRKGSIIKLEILINDEPVDAFSCLVHRDKAEARGRSICEKLVDVIPQQLFKIPIQAAINKKVIARETIRALSKNVTAKCYGGDITRKRKLWEKQKKGKKRMKEFGKVSIPNTAFIEVLKID.

The tr-type G domain occupies 7-188; the sequence is ENIRNFSIIA…AIIELIPPPK (182 aa). GTP is bound by residues 19-24 and 135-138; these read DHGKST and NKID.

It belongs to the TRAFAC class translation factor GTPase superfamily. Classic translation factor GTPase family. LepA subfamily.

The protein resides in the cell inner membrane. The enzyme catalyses GTP + H2O = GDP + phosphate + H(+). Its function is as follows. Required for accurate and efficient protein synthesis under certain stress conditions. May act as a fidelity factor of the translation reaction, by catalyzing a one-codon backward translocation of tRNAs on improperly translocated ribosomes. Back-translocation proceeds from a post-translocation (POST) complex to a pre-translocation (PRE) complex, thus giving elongation factor G a second chance to translocate the tRNAs correctly. Binds to ribosomes in a GTP-dependent manner. The protein is Elongation factor 4 of Chlamydia caviae (strain ATCC VR-813 / DSM 19441 / 03DC25 / GPIC) (Chlamydophila caviae).